A 1187-amino-acid polypeptide reads, in one-letter code: DNA excision repair protein CSB (1187 aa).

Polar residues predominate over residues 31–43; that stretch reads QATTDPADSSGPT. 4 disordered regions span residues 31–53, 75–102, 217–242, and 265–351; these read QATT…PDDA, IKGA…HHGA, KRVE…MEAS, and DSES…EGSD. 2 stretches are compositionally biased toward basic and acidic residues: residues 92 to 101 and 217 to 230; these read KGKDQPDHHG and KRVE…RQDD. Basic residues predominate over residues 300 to 319; that stretch reads KRPRNKTKRPLPGKKWRKAN. The span at 339–351 shows a compositional bias: acidic residues; that stretch reads SDDDEDQVTEGSD. The Helicase ATP-binding domain occupies 384–580; it reads WELHCQRAGG…WSLFDFVFPG (197 aa). 397–404 contacts ATP; it reads DEMGLGKT. The segment at 457-480 is disordered; sequence SSSKKSKRSSDSDSEASWDSDQEE. Residues 468–480 show a composition bias toward acidic residues; the sequence is SDSEASWDSDQEE. The DEGH box signature appears at 531–534; that stretch reads DEGH. The Helicase C-terminal domain maps to 716–876; sequence KVVEQVLKVW…RRFFKARDMK (161 aa). Disordered regions lie at residues 916-945 and 1095-1116; these read LYAA…HCPD and GSAS…SSTR. Positions 918-933 are enriched in low complexity; that stretch reads AASATPTTSGTEPSSS.

The protein belongs to the SNF2/RAD54 helicase family. As to quaternary structure, homodimer. Binds DNA. Expressed in proliferating tissues. Highly expressed in shoot apical meristem (SAM). Expressed in roots, young leaves, flag leaves, and panicles. Expressed at very low levels in mature leaves.

Its subcellular location is the nucleus. Functionally, essential factor involved in transcription-coupled nucleotide excision repair (TCR) which allows RNA polymerase II-blocking lesions to be rapidly removed from the transcribed strand of active genes. Upon DNA-binding, it locally modifies DNA conformation by wrapping the DNA around itself, thereby modifying the interface between stalled RNA polymerase II and DNA. It is required for transcription-coupled repair complex formation. In Oryza sativa subsp. japonica (Rice), this protein is DNA excision repair protein CSB.